We begin with the raw amino-acid sequence, 395 residues long: Protein pelota (395 aa).

A PGF motif motif is present at residues 210-212 (PGF). The interval 371–395 (PELEDSDDDDDEDGAAGGVADSDSD) is disordered. Over residues 372-384 (ELEDSDDDDDEDG) the composition is skewed to acidic residues.

It belongs to the eukaryotic release factor 1 family. Pelota subfamily. In terms of assembly, component of the Pelota-HBS1L complex, also named Dom34-Hbs1 complex, composed of pelo and HBS1. Interacts with Pink1 and Cnot4; the interaction with Cnot4 appears to be Pink1-dependent. Requires a divalent metal cation as cofactor. Expressed in ovaries and muscles (at protein level). Expressed throughout all development stages.

The protein resides in the nucleus. Its subcellular location is the cytoplasm. In terms of biological role, component of the Pelota-HBS1L complex, a complex that recognizes stalled ribosomes and triggers the No-Go Decay (NGD) pathway. In the Pelota-HBS1L complex, pelo recognizes ribosomes stalled at the 3' end of an mRNA and engages stalled ribosomes by destabilizing mRNA in the mRNA channel. Following ribosome-binding, the Pelota-HBS1L complex promotes recruitment of pix, which drives the disassembly of stalled ribosomes, followed by degradation of damaged mRNAs as part of the NGD pathway. Required prior to the first meiotic division for spindle formation and nuclear envelope breakdown during spermatogenesis. Together with HBS1, promotes spermatid individualization during spermatogenesis. Required for ovarian germ line stem cell self-renewal and oocyte development during oogenesis. Together with HSB1, required for transposon silencing in the ovary and testis. As part of the Pink1-regulated signaling, is recruited to damaged mitochondrial and is required for recruitment of autophagy receptors and induction of mitophagy. Required for normal eye patterning and for mitotic divisions in the ovary. The sequence is that of Protein pelota (pelo) from Drosophila melanogaster (Fruit fly).